Here is a 430-residue protein sequence, read N- to C-terminus: Adenylosuccinate synthetase (430 aa).

GTP is bound by residues 12-18 (GDEGKGK) and 40-42 (GHT). Asp13 serves as the catalytic Proton acceptor. Residues Asp13 and Gly40 each coordinate Mg(2+). Residues 13 to 16 (DEGK), 38 to 41 (NAGH), Thr128, Arg142, Gln223, Thr238, and Arg302 each bind IMP. His41 (proton donor) is an active-site residue. 298-304 (TTTGRPR) contributes to the substrate binding site. Residues Arg304, 330–332 (CID), and 412–414 (SVG) each bind GTP.

The protein belongs to the adenylosuccinate synthetase family. Homodimer. Requires Mg(2+) as cofactor.

It is found in the cytoplasm. It carries out the reaction IMP + L-aspartate + GTP = N(6)-(1,2-dicarboxyethyl)-AMP + GDP + phosphate + 2 H(+). The protein operates within purine metabolism; AMP biosynthesis via de novo pathway; AMP from IMP: step 1/2. In terms of biological role, plays an important role in the de novo pathway of purine nucleotide biosynthesis. Catalyzes the first committed step in the biosynthesis of AMP from IMP. The sequence is that of Adenylosuccinate synthetase from Streptococcus thermophilus (strain CNRZ 1066).